We begin with the raw amino-acid sequence, 457 residues long: Adenylyltransferase and sulfurtransferase MOCS3 (457 aa).

Residues A40 to T60 are disordered. The residue at position 63 (T63) is a Phosphothreonine. ATP-binding positions include G102, D123, S130 to R134, K147, and D191 to N192. The Zn(2+) site is built by C233 and C236. C250 serves as the catalytic Glycyl thioester intermediate; for adenylyltransferase activity. Zn(2+) contacts are provided by C309 and C312. Residues E358–P455 enclose the Rhodanese domain. The Cysteine persulfide intermediate; for sulfurtransferase activity role is filled by C414.

It in the N-terminal section; belongs to the HesA/MoeB/ThiF family. UBA4 subfamily. The cofactor is Zn(2+).

The protein resides in the cytoplasm. Its subcellular location is the cytosol. The catalysed reaction is [molybdopterin-synthase sulfur-carrier protein]-C-terminal Gly-Gly + ATP + H(+) = [molybdopterin-synthase sulfur-carrier protein]-C-terminal Gly-Gly-AMP + diphosphate. It catalyses the reaction [molybdopterin-synthase sulfur-carrier protein]-C-terminal Gly-Gly-AMP + S-sulfanyl-L-cysteinyl-[cysteine desulfurase] + AH2 = [molybdopterin-synthase sulfur-carrier protein]-C-terminal-Gly-aminoethanethioate + L-cysteinyl-[cysteine desulfurase] + A + AMP + 2 H(+). The protein operates within tRNA modification; 5-methoxycarbonylmethyl-2-thiouridine-tRNA biosynthesis. It functions in the pathway cofactor biosynthesis; molybdopterin biosynthesis. Functionally, plays a central role in 2-thiolation of mcm(5)S(2)U at tRNA wobble positions of cytosolic tRNA(Lys), tRNA(Glu) and tRNA(Gln). Also essential during biosynthesis of the molybdenum cofactor. Acts by mediating the C-terminal thiocarboxylation of sulfur carriers URM1 and MOCS2A. Its N-terminus first activates URM1 and MOCS2A as acyl-adenylates (-COAMP), then the persulfide sulfur on the catalytic cysteine is transferred to URM1 and MOCS2A to form thiocarboxylation (-COSH) of their C-terminus. The reaction probably involves hydrogen sulfide that is generated from the persulfide intermediate and that acts as a nucleophile towards URM1 and MOCS2A. Subsequently, a transient disulfide bond is formed. Does not use thiosulfate as sulfur donor; NFS1 probably acting as a sulfur donor for thiocarboxylation reactions. The chain is Adenylyltransferase and sulfurtransferase MOCS3 from Drosophila willistoni (Fruit fly).